Here is a 692-residue protein sequence, read N- to C-terminus: Elongation factor G (692 aa).

One can recognise a tr-type G domain in the interval 8-282 (EKTRNIGIMA…AVVEYMPAPT (275 aa)). GTP is bound by residues 17-24 (AHIDAGKT), 81-85 (DTPGH), and 135-138 (NKMD). The tract at residues 285 to 304 (PNIKGVHPETGEADERHSSD) is disordered. Basic and acidic residues predominate over residues 290–304 (VHPETGEADERHSSD).

This sequence belongs to the TRAFAC class translation factor GTPase superfamily. Classic translation factor GTPase family. EF-G/EF-2 subfamily.

The protein resides in the cytoplasm. Catalyzes the GTP-dependent ribosomal translocation step during translation elongation. During this step, the ribosome changes from the pre-translocational (PRE) to the post-translocational (POST) state as the newly formed A-site-bound peptidyl-tRNA and P-site-bound deacylated tRNA move to the P and E sites, respectively. Catalyzes the coordinated movement of the two tRNA molecules, the mRNA and conformational changes in the ribosome. The sequence is that of Elongation factor G from Desulfitobacterium hafniense (strain Y51).